Reading from the N-terminus, the 249-residue chain is Enolase-phosphatase E1 (249 aa).

D14 and E16 together coordinate Mg(2+). Residues 141-142 (SS) and K175 contribute to the substrate site. D200 is a binding site for Mg(2+).

It belongs to the HAD-like hydrolase superfamily. MasA/MtnC family. In terms of assembly, monomer. Requires Mg(2+) as cofactor.

Its subcellular location is the cytoplasm. It is found in the nucleus. The catalysed reaction is 5-methylsulfanyl-2,3-dioxopentyl phosphate + H2O = 1,2-dihydroxy-5-(methylsulfanyl)pent-1-en-3-one + phosphate. Its pathway is amino-acid biosynthesis; L-methionine biosynthesis via salvage pathway; L-methionine from S-methyl-5-thio-alpha-D-ribose 1-phosphate: step 3/6. It participates in amino-acid biosynthesis; L-methionine biosynthesis via salvage pathway; L-methionine from S-methyl-5-thio-alpha-D-ribose 1-phosphate: step 4/6. Its function is as follows. Bifunctional enzyme that catalyzes the enolization of 2,3-diketo-5-methylthiopentyl-1-phosphate (DK-MTP-1-P) into the intermediate 2-hydroxy-3-keto-5-methylthiopentenyl-1-phosphate (HK-MTPenyl-1-P), which is then dephosphorylated to form the acireductone 1,2-dihydroxy-3-keto-5-methylthiopentene (DHK-MTPene). The sequence is that of Enolase-phosphatase E1 from Drosophila virilis (Fruit fly).